Consider the following 356-residue polypeptide: Alternative oxidase, mitochondrial (356 aa).

Residues 152-172 (VIRFIFLETVAGVPGMVGGML) form a helical membrane-spanning segment. E159, E198, and H201 together coordinate Fe cation. The chain crosses the membrane as a helical span at residues 217–237 (LMVLGAQGVFFNGFFISYLIS). The Fe cation site is built by E249, E304, and H307. Residues 330–356 (YDNPEAPHPTKSAEIVKPTGWERDEVI) form a disordered region.

It belongs to the alternative oxidase family. Requires Fe cation as cofactor.

It localises to the mitochondrion inner membrane. Catalyzes cyanide-resistant oxygen consumption. May increase respiration when the cytochrome respiratory pathway is restricted, or in response to low temperatures. In Ajellomyces capsulatus (Darling's disease fungus), this protein is Alternative oxidase, mitochondrial (AOX1).